The primary structure comprises 122 residues: Large ribosomal subunit protein bL19 (122 aa).

This sequence belongs to the bacterial ribosomal protein bL19 family.

Functionally, this protein is located at the 30S-50S ribosomal subunit interface and may play a role in the structure and function of the aminoacyl-tRNA binding site. In Acinetobacter baumannii (strain AB307-0294), this protein is Large ribosomal subunit protein bL19.